Reading from the N-terminus, the 403-residue chain is D-mannonate dehydratase CC0532 (403 aa).

Residues asparagine 38 and histidine 123 each coordinate substrate. The active-site Proton donor/acceptor is the tyrosine 160. Mg(2+) is bound at residue aspartate 211. Catalysis depends on histidine 213, which acts as the Proton donor/acceptor. The Mg(2+) site is built by glutamate 237 and glutamate 263. 5 residues coordinate substrate: glutamate 263, arginine 284, histidine 313, aspartate 317, and glutamate 340.

This sequence belongs to the mandelate racemase/muconate lactonizing enzyme family. GalD subfamily. The cofactor is Mg(2+).

The enzyme catalyses D-mannonate = 2-dehydro-3-deoxy-D-gluconate + H2O. Its pathway is carbohydrate metabolism; pentose and glucuronate interconversion. Catalyzes the dehydration of D-mannonate. Has no detectable activity with a panel of 70 other acid sugars (in vitro). The protein is D-mannonate dehydratase CC0532 of Caulobacter vibrioides (strain ATCC 19089 / CIP 103742 / CB 15) (Caulobacter crescentus).